The following is a 177-amino-acid chain: Alpha-crystallin A chain (177 aa).

At M1 the chain carries N-acetylmethionine. The sHSP domain occupies 52–162 (VFRNFLDSGI…NWQDRPIPVS (111 aa)). Residues H100 and E102 each contribute to the Zn(2+) site. Residues C131 and C142 are joined by a disulfide bond. The segment at 146-177 (TRPGDDSNWQDRPIPVSREEKQGTQPEIRADP) is disordered. O-linked (GlcNAc) serine glycosylation is present at S162. Basic and acidic residues predominate over residues 162–177 (SREEKQGTQPEIRADP).

This sequence belongs to the small heat shock protein (HSP20) family. In terms of assembly, heteropolymer composed of three CRYAA and one CRYAB subunits. Inter-subunit bridging via zinc ions enhances stability, which is crucial as there is no protein turn over in the lens. Can also form homodimers and homotetramers (dimers of dimers) which serve as the building blocks of homooligomers.

It localises to the cytoplasm. It is found in the nucleus. Its function is as follows. Contributes to the transparency and refractive index of the lens. May act as a chaperone, preventing aggregation of various proteins under a wide range of stress conditions. This is Alpha-crystallin A chain (cryaa) from Squalus acanthias (Spiny dogfish).